We begin with the raw amino-acid sequence, 617 residues long: Proline--tRNA ligase (617 aa).

Belongs to the class-II aminoacyl-tRNA synthetase family. ProS type 1 subfamily. In terms of assembly, homodimer.

Its subcellular location is the cytoplasm. The catalysed reaction is tRNA(Pro) + L-proline + ATP = L-prolyl-tRNA(Pro) + AMP + diphosphate. Catalyzes the attachment of proline to tRNA(Pro) in a two-step reaction: proline is first activated by ATP to form Pro-AMP and then transferred to the acceptor end of tRNA(Pro). As ProRS can inadvertently accommodate and process non-cognate amino acids such as alanine and cysteine, to avoid such errors it has two additional distinct editing activities against alanine. One activity is designated as 'pretransfer' editing and involves the tRNA(Pro)-independent hydrolysis of activated Ala-AMP. The other activity is designated 'posttransfer' editing and involves deacylation of mischarged Ala-tRNA(Pro). The misacylated Cys-tRNA(Pro) is not edited by ProRS. The chain is Proline--tRNA ligase from Treponema pallidum (strain Nichols).